The primary structure comprises 586 residues: Phosphomethylpyrimidine synthase (586 aa).

The segment at 1–59 (MKQSVSAEQIELKSSLPGSKKVYVDGPREGMKVPMREIEQSDTNGVPNPPIRVYDTSGP) is disordered. A compositionally biased stretch (basic and acidic residues) spans 22-39 (VYVDGPREGMKVPMREIE). Substrate is bound by residues asparagine 193, methionine 222, tyrosine 251, histidine 287, 307 to 309 (SRG), 348 to 351 (DGLR), and glutamate 387. Histidine 391 serves as a coordination point for Zn(2+). Tyrosine 414 contacts substrate. Position 455 (histidine 455) interacts with Zn(2+). Residues cysteine 535, cysteine 538, and cysteine 543 each coordinate [4Fe-4S] cluster.

Belongs to the ThiC family. [4Fe-4S] cluster serves as cofactor.

It catalyses the reaction 5-amino-1-(5-phospho-beta-D-ribosyl)imidazole + S-adenosyl-L-methionine = 4-amino-2-methyl-5-(phosphooxymethyl)pyrimidine + CO + 5'-deoxyadenosine + formate + L-methionine + 3 H(+). It functions in the pathway cofactor biosynthesis; thiamine diphosphate biosynthesis. Functionally, catalyzes the synthesis of the hydroxymethylpyrimidine phosphate (HMP-P) moiety of thiamine from aminoimidazole ribotide (AIR) in a radical S-adenosyl-L-methionine (SAM)-dependent reaction. This chain is Phosphomethylpyrimidine synthase, found in Bacillus cereus (strain ATCC 10987 / NRS 248).